The following is a 246-amino-acid chain: MNPLISDFQTPQQRTPVIVALDFSNEKDTLGFVRNLDPTLCQIKIGKELFTATGRNLAESLINQGFKLFLDLKYHDIPHTVAQACKVAADMGVWMVDMHASGGRRMMEAAAEAVAGYGTKPLLIGVTVLTSMEQSDLAEIGLNTAPEEQVIRLAKLAQSSGLDGVVCSAQEAAPLRRELGQDFVLVTPGIRLDVAGNNDDQRRIMTPAEALAAGSTYLVMGRPVTQAADPVAVLREVNRVANLEAN.

Substrate-binding positions include Asp-22, Lys-44, 71–80 (DLKYHDIPHT), Thr-130, Arg-191, Gln-201, Gly-221, and Arg-222. Lys-73 functions as the Proton donor in the catalytic mechanism.

Belongs to the OMP decarboxylase family. Type 1 subfamily. As to quaternary structure, homodimer.

It carries out the reaction orotidine 5'-phosphate + H(+) = UMP + CO2. The protein operates within pyrimidine metabolism; UMP biosynthesis via de novo pathway; UMP from orotate: step 2/2. Catalyzes the decarboxylation of orotidine 5'-monophosphate (OMP) to uridine 5'-monophosphate (UMP). The sequence is that of Orotidine 5'-phosphate decarboxylase from Neisseria meningitidis serogroup B (strain ATCC BAA-335 / MC58).